A 364-amino-acid chain; its full sequence is MAKYTVAVAGATGYAGGEALRILAAHPDFDITCVAGHSSVGESMAKHMPHIPQLANLVVEDTAPEVLNGHDVIILALPHGASGKLASQLDPNAVVVDLGADHRLEEQAAWDEFYGGDFYEHWTYGMPELITGKAADGSYTRQRAALPGTKRIAGPGCNVTATTLALQPGIAEGLVESQDIVADLVVGYSGAGKNLKRTNLLAAEALQSALPYSVGGKHRHIPEILQNFAHAAGKSAAEASEFTLGFTPILAPMSRGILATVSARMTDKAKTLSDEEIRAVWSKAYEGQDFMVLLPEGTLPATGNIIGSNAAHLQVVTDRKAGRIYAFAAIDNLNRGTAGQAVQSLNIALGLPEDAGLTKIGVAP.

Cysteine 157 is a catalytic residue.

This sequence belongs to the NAGSA dehydrogenase family. Type 1 subfamily.

It localises to the cytoplasm. It catalyses the reaction N-acetyl-L-glutamate 5-semialdehyde + phosphate + NADP(+) = N-acetyl-L-glutamyl 5-phosphate + NADPH + H(+). It participates in amino-acid biosynthesis; L-arginine biosynthesis; N(2)-acetyl-L-ornithine from L-glutamate: step 3/4. Its function is as follows. Catalyzes the NADPH-dependent reduction of N-acetyl-5-glutamyl phosphate to yield N-acetyl-L-glutamate 5-semialdehyde. This Bifidobacterium longum (strain NCC 2705) protein is N-acetyl-gamma-glutamyl-phosphate reductase.